A 565-amino-acid chain; its full sequence is Probable serine/threonine-protein kinase abkA (565 aa).

A coiled-coil region spans residues 44–77 (NNNNISLKDKFKDLKDLKDNLNEKKINNDNDDDD). In terms of domain architecture, Protein kinase spans 231-565 (LFQDDPIAAA…FKNIFYKNYK (335 aa)). ATP-binding positions include 237–245 (IAAASIGQV) and lysine 259. Residue aspartate 401 is the Proton acceptor of the active site.

It belongs to the protein kinase superfamily. ADCK protein kinase family.

The polypeptide is Probable serine/threonine-protein kinase abkA (abkA) (Dictyostelium discoideum (Social amoeba)).